Here is a 274-residue protein sequence, read N- to C-terminus: Thiamine kinase (274 aa).

The protein belongs to the thiamine kinase family.

The catalysed reaction is thiamine + ATP = thiamine phosphate + ADP + H(+). It participates in cofactor biosynthesis; thiamine diphosphate biosynthesis; thiamine phosphate from thiamine: step 1/1. Catalyzes the ATP-dependent phosphorylation of thiamine to thiamine phosphate. Is involved in thiamine salvage. The protein is Thiamine kinase of Salmonella gallinarum (strain 287/91 / NCTC 13346).